The primary structure comprises 325 residues: Lactonase drp35 (325 aa).

Positions 46, 108, 110, 128, 131, 133, 136, 183, 234, and 235 each coordinate Ca(2+). The Proton donor role is filled by Asp234.

The protein belongs to the SMP-30/CGR1 family. It depends on Ca(2+) as a cofactor.

The protein resides in the cytoplasm. Functionally, exhibits lactonase activity. Acts in cells with perturbed membrane integrity and is possibly related to the membrane homeostasis. This Staphylococcus epidermidis (strain ATCC 12228 / FDA PCI 1200) protein is Lactonase drp35 (drp35).